The sequence spans 242 residues: Small ribosomal subunit protein eS6 (242 aa).

Residues 219 to 229 are compositionally biased toward basic and acidic residues; it reads EKKSEKAEEKK. The tract at residues 219-242 is disordered; sequence EKKSEKAEEKKRRASSLRTQSVQA. Phosphoserine is present on residues S233 and S234.

This sequence belongs to the eukaryotic ribosomal protein eS6 family. Post-translationally, phosphorylated.

The sequence is that of Small ribosomal subunit protein eS6 (RPS6) from Yarrowia lipolytica (strain CLIB 122 / E 150) (Yeast).